A 131-amino-acid polypeptide reads, in one-letter code: Maturin (131 aa).

Positions 107–120 are enriched in acidic residues; it reads FEEYNADVEEEEPE. The tract at residues 107–131 is disordered; the sequence is FEEYNADVEEEEPEADHQQMGVSQQ.

Belongs to the MTURN family.

It is found in the cytoplasm. Involved in early neuronal development; required for cell cycle exit and differentiation of primary neurons. Cooperates synergistically with pak3 to promote primary neural differentiation within the neural plate. May play a role in promoting megakaryocyte differentiation. The chain is Maturin (mturn) from Xenopus laevis (African clawed frog).